A 159-amino-acid polypeptide reads, in one-letter code: Neuroglobin (159 aa).

The Globin domain maps to 3-151 (KLSEKDKELI…VVAAMSQGWA (149 aa)). The heme b site is built by His66 and His98.

This sequence belongs to the globin family. Monomer. Homodimers and homotetramers. Mainly monomeric but also detected as part of homodimers and homotetramers.

Its subcellular location is the cytoplasm. The protein resides in the cytosol. The protein localises to the mitochondrion matrix. It catalyses the reaction Fe(III)-heme b-[protein] + nitric oxide + H2O = Fe(II)-heme b-[protein] + nitrite + 2 H(+). Its function is as follows. Monomeric globin with a bis-histidyl six-coordinate heme-iron atom through which it can bind dioxygen, carbon monoxide and nitric oxide. Could help transport oxygen and increase its availability to the metabolically active neuronal tissues, though its low quantity in tissues as well as its high affinity for dioxygen, which may limit its oxygen-releasing ability, argue against it. The ferrous/deoxygenated form exhibits a nitrite reductase activity and it could produce nitric oxide which in turn inhibits cellular respiration in response to hypoxia. In its ferrous/deoxygenated state, it may also exhibit GDI (Guanine nucleotide Dissociation Inhibitor) activity toward heterotrimeric G-alpha proteins, thereby regulating signal transduction to facilitate neuroprotective responses in the wake of hypoxia and associated oxidative stress. This chain is Neuroglobin (ngb), found in Chaenocephalus aceratus (Blackfin icefish).